We begin with the raw amino-acid sequence, 266 residues long: Phosphatidylglycerol--prolipoprotein diacylglyceryl transferase (266 aa).

Helical transmembrane passes span 19 to 39 (IWGP…FAFA), 61 to 81 (LMFW…TLFY), 91 to 111 (LYLF…LGVI), 125 to 145 (FLQV…FGRI), 176 to 196 (PSQL…ILWF), 204 to 224 (GAVS…VEFF), and 237 to 257 (GMSM…ILMV). A 1,2-diacyl-sn-glycero-3-phospho-(1'-sn-glycerol) is bound at residue Arg144.

It belongs to the Lgt family.

The protein resides in the cell inner membrane. It catalyses the reaction L-cysteinyl-[prolipoprotein] + a 1,2-diacyl-sn-glycero-3-phospho-(1'-sn-glycerol) = an S-1,2-diacyl-sn-glyceryl-L-cysteinyl-[prolipoprotein] + sn-glycerol 1-phosphate + H(+). The protein operates within protein modification; lipoprotein biosynthesis (diacylglyceryl transfer). Catalyzes the transfer of the diacylglyceryl group from phosphatidylglycerol to the sulfhydryl group of the N-terminal cysteine of a prolipoprotein, the first step in the formation of mature lipoproteins. In Idiomarina loihiensis (strain ATCC BAA-735 / DSM 15497 / L2-TR), this protein is Phosphatidylglycerol--prolipoprotein diacylglyceryl transferase.